The primary structure comprises 95 residues: Small ribosomal subunit protein bS16 (95 aa).

The protein belongs to the bacterial ribosomal protein bS16 family.

The protein is Small ribosomal subunit protein bS16 of Thermotoga neapolitana (strain ATCC 49049 / DSM 4359 / NBRC 107923 / NS-E).